We begin with the raw amino-acid sequence, 236 residues long: 2-C-methyl-D-erythritol 4-phosphate cytidylyltransferase (236 aa).

This sequence belongs to the IspD/TarI cytidylyltransferase family. IspD subfamily.

The catalysed reaction is 2-C-methyl-D-erythritol 4-phosphate + CTP + H(+) = 4-CDP-2-C-methyl-D-erythritol + diphosphate. Its pathway is isoprenoid biosynthesis; isopentenyl diphosphate biosynthesis via DXP pathway; isopentenyl diphosphate from 1-deoxy-D-xylulose 5-phosphate: step 2/6. Catalyzes the formation of 4-diphosphocytidyl-2-C-methyl-D-erythritol from CTP and 2-C-methyl-D-erythritol 4-phosphate (MEP). The chain is 2-C-methyl-D-erythritol 4-phosphate cytidylyltransferase from Burkholderia orbicola (strain AU 1054).